Here is a 908-residue protein sequence, read N- to C-terminus: Protein translocase subunit SecA (908 aa).

Residues Q90, 108–112 (GEGKT), and D503 each bind ATP. Residues 846–864 (AAAAEAPVAPAPQPAAAAP) show a composition bias toward low complexity. Residues 846–884 (AAAAEAPVAPAPQPAAAAPQPTPELVGAEAGEPDPAAWG) form a disordered region. Zn(2+) is bound by residues C892, C894, C903, and H904.

Belongs to the SecA family. In terms of assembly, monomer and homodimer. Part of the essential Sec protein translocation apparatus which comprises SecA, SecYEG and auxiliary proteins SecDF-YajC and YidC. Requires Zn(2+) as cofactor.

It localises to the cell inner membrane. The protein resides in the cytoplasm. The enzyme catalyses ATP + H2O + cellular proteinSide 1 = ADP + phosphate + cellular proteinSide 2.. In terms of biological role, part of the Sec protein translocase complex. Interacts with the SecYEG preprotein conducting channel. Has a central role in coupling the hydrolysis of ATP to the transfer of proteins into and across the cell membrane, serving both as a receptor for the preprotein-SecB complex and as an ATP-driven molecular motor driving the stepwise translocation of polypeptide chains across the membrane. This chain is Protein translocase subunit SecA, found in Cereibacter sphaeroides (strain KD131 / KCTC 12085) (Rhodobacter sphaeroides).